A 190-amino-acid chain; its full sequence is MNKPTREEAKEAVRTLLRFIGEDPTREGLLKTPDRVINSYMEIFSGYGKDVQEILNTKFYDTYNFQDLISLEGIKFTSFCEHHILPFNGTVHIAYIPDNCIIGVSKLARIVNIFSRRLQIQEKMTVQIAESIQESLKPLGVAIKISAFHSCMSMRGVMHDNSVMNTMYYTGIFAEQQKYRHEFLNFIAKR.

Zn(2+) is bound by residues C80, H83, and C151.

The protein belongs to the GTP cyclohydrolase I family. In terms of assembly, toroid-shaped homodecamer, composed of two pentamers of five dimers.

The catalysed reaction is GTP + H2O = 7,8-dihydroneopterin 3'-triphosphate + formate + H(+). It participates in cofactor biosynthesis; 7,8-dihydroneopterin triphosphate biosynthesis; 7,8-dihydroneopterin triphosphate from GTP: step 1/1. This Rickettsia typhi (strain ATCC VR-144 / Wilmington) protein is GTP cyclohydrolase 1.